The primary structure comprises 734 residues: ATP-dependent RNA helicase SUV3L, mitochondrial (734 aa).

The N-terminal 60 residues, 1 to 60, are a transit peptide targeting the mitochondrion; the sequence is MAAAAAIAAALLRRSTSSQHHRRILLLPLLSHLQRAAPRSPSPWDPPPHHRFFFSSDVTA. The segment at 58–88 is disordered; that stretch reads VTAEGDSKPRPPLDGKQLWREVSTSEPATGA. The segment covering 62 to 76 has biased composition (basic and acidic residues); the sequence is GDSKPRPPLDGKQLW. Residues 198-356 form the Helicase ATP-binding domain; the sequence is FARAMRRRVV…RFKPLVVEAK (159 aa). 211-218 is an ATP binding site; sequence GPTNSGKT. One can recognise a Helicase C-terminal domain in the interval 357-525; the sequence is TLLGDLKNVR…SFAIQFPDLT (169 aa). 2 N-linked (GlcNAc...) asparagine glycosylation sites follow: asparagine 594 and asparagine 614. The segment at 667 to 734 is disordered; it reads ASWKPTSRQQ…QDPSSLNFVA (68 aa). The span at 684–693 shows a compositional bias: acidic residues; that stretch reads EEDNDVEQAS. Over residues 695–709 the composition is skewed to basic and acidic residues; that stretch reads DNAKNDSEDGYERSI. An N-linked (GlcNAc...) asparagine glycan is attached at asparagine 699. Over residues 725–734 the composition is skewed to polar residues; it reads QDPSSLNFVA.

The protein belongs to the helicase family. Homodimer; in free form. Component of the mitochondrial degradosome (mtEXO) complex which is a heteropentamer containing 2 copies of SUPV3L1 and 3 copies of PNPT1. Mg(2+) is required as a cofactor. Requires Mn(2+) as cofactor.

The protein localises to the nucleus. Its subcellular location is the mitochondrion matrix. The protein resides in the mitochondrion nucleoid. It catalyses the reaction ATP + H2O = ADP + phosphate + H(+). Functionally, major helicase player in mitochondrial RNA metabolism. Component of the mitochondrial degradosome (mtEXO) complex, that degrades 3' overhang double-stranded RNA with a 3'-to-5' directionality in an ATP-dependent manner. ATPase and ATP-dependent multisubstrate helicase, able to unwind double-stranded (ds) DNA and RNA, and RNA/DNA heteroduplexes in the 5'-to-3' direction. Plays a role in the RNA surveillance system in mitochondria; regulates the stability of mature mRNAs, the removal of aberrantly formed mRNAs and the rapid degradation of non coding processing intermediates. Confers salinity and drought stress tolerances by maintaining both photosynthesis and antioxidant machinery, probably via an increase in plant hormones levels such as gibberellic acid (GA(3)), the cytokinin zeatin (Z) and indole-3-acetic acid (IAA). In Oryza sativa subsp. japonica (Rice), this protein is ATP-dependent RNA helicase SUV3L, mitochondrial.